A 454-amino-acid polypeptide reads, in one-letter code: Phosphoglucosamine mutase (454 aa).

S101 functions as the Phosphoserine intermediate in the catalytic mechanism. Residues S101, D243, D245, and D247 each coordinate Mg(2+). S101 carries the phosphoserine modification.

This sequence belongs to the phosphohexose mutase family. Mg(2+) is required as a cofactor. Post-translationally, activated by phosphorylation.

The catalysed reaction is alpha-D-glucosamine 1-phosphate = D-glucosamine 6-phosphate. Its function is as follows. Catalyzes the conversion of glucosamine-6-phosphate to glucosamine-1-phosphate. In Geotalea uraniireducens (strain Rf4) (Geobacter uraniireducens), this protein is Phosphoglucosamine mutase.